Consider the following 228-residue polypeptide: 7-cyano-7-deazaguanine synthase (228 aa).

Leucine 7 to threonine 17 contacts ATP. Positions 187, 195, 198, and 201 each coordinate Zn(2+).

It belongs to the QueC family. Requires Zn(2+) as cofactor.

The catalysed reaction is 7-carboxy-7-deazaguanine + NH4(+) + ATP = 7-cyano-7-deazaguanine + ADP + phosphate + H2O + H(+). The protein operates within purine metabolism; 7-cyano-7-deazaguanine biosynthesis. Catalyzes the ATP-dependent conversion of 7-carboxy-7-deazaguanine (CDG) to 7-cyano-7-deazaguanine (preQ(0)). The polypeptide is 7-cyano-7-deazaguanine synthase (Chlorobium chlorochromatii (strain CaD3)).